The primary structure comprises 493 residues: Sodium-coupled neutral amino acid symporter 2 (493 aa).

Topologically, residues 1 to 72 (MNNAEVLNVA…LPGTTSFGMS (72 aa)) are cytoplasmic. Residues 1-92 (MNNAEVLNVA…SGILGLSYAM (92 aa)) form a regulates protein turnover upon amino acid deprivation region. Residues 73–92 (VFNLSNAIVGSGILGLSYAM) form a helical membrane-spanning segment. Position 78 (asparagine 78) interacts with Na(+). Residues 93–98 (ANTGIA) are Extracellular-facing. Residues 99–119 (LFMILLVFVTVFSLYSIHLLL) traverse the membrane as a helical segment. The Cytoplasmic portion of the chain corresponds to 120–154 (KTANEGGSLLYEQLGLKAFGIPGKLAASGSVTLQN). Residues 155–173 (IGAMSSYLYIVKYELPLVI) traverse the membrane as a helical segment. Residues 174 to 184 (KALMDIKESNG) lie on the Extracellular side of the membrane. Residues 185–205 (EWYLNGDYLVIMVSLAIILPL) traverse the membrane as a helical segment. The Cytoplasmic portion of the chain corresponds to 206-213 (SLLRNLGY). The chain crosses the membrane as a helical span at residues 214 to 234 (LGYTSGFSPLCMVFFLIVVIY). Residues 235 to 279 (KKFEIPCPLEAMNMTSNSSSHDHMAHNETDDEMCKPKYFVFNSQT) lie on the Extracellular side of the membrane. A disulfide bond links cysteine 241 and cysteine 268. N-linked (GlcNAc...) asparagine glycans are attached at residues asparagine 247, asparagine 251, and asparagine 261. Residues 280–300 (VYAVPILTFSFVCHPAVLPIY) form a helical membrane-spanning segment. Residues 301–316 (QELKGRSRRRMMNVSN) lie on the Cytoplasmic side of the membrane. A helical transmembrane segment spans residues 317-337 (VSFFAMFIMYLLAALFGYLTF). Residues 338 to 358 (YSKVEPELLHTYSKVFGAGVI) are Extracellular-facing. A helical membrane pass occupies residues 359–379 (FVVVRLAVLMAVTLTVPIVIF). Residue threonine 373 participates in Na(+) binding. Residues 380–400 (PIRSSLNELFCSGKDFAWIRH) are Cytoplasmic-facing. Residues 401-421 (ILITFLILAFTNVLVIFVPTI) traverse the membrane as a helical segment. Residues 422–423 (RD) are Extracellular-facing. A helical transmembrane segment spans residues 424-444 (IFGFIGASAAAMLVFILPSAF). At 445 to 459 (YIRLVKKESMKSVQK) the chain is on the cytoplasmic side. The chain crosses the membrane as a helical span at residues 460–482 (IGALLFLIGGIIVMIGSMTLIIL). Over 483–493 (DWIHNSTSGGN) the chain is Extracellular.

The protein belongs to the amino acid/polyamine transporter 2 family.

It is found in the cell membrane. The enzyme catalyses L-alanine(in) + Na(+)(in) = L-alanine(out) + Na(+)(out). The catalysed reaction is glycine(in) + Na(+)(in) = glycine(out) + Na(+)(out). It carries out the reaction L-serine(in) + Na(+)(in) = L-serine(out) + Na(+)(out). It catalyses the reaction L-proline(in) + Na(+)(in) = L-proline(out) + Na(+)(out). The enzyme catalyses L-methionine(in) + Na(+)(in) = L-methionine(out) + Na(+)(out). The catalysed reaction is L-histidine(in) + Na(+)(in) = L-histidine(out) + Na(+)(out). It carries out the reaction L-asparagine(in) + Na(+)(in) = L-asparagine(out) + Na(+)(out). It catalyses the reaction L-glutamine(in) + Na(+)(in) = L-glutamine(out) + Na(+)(out). The enzyme catalyses L-threonine(in) + Na(+)(in) = L-threonine(out) + Na(+)(out). The catalysed reaction is L-leucine(in) + Na(+)(in) = L-leucine(out) + Na(+)(out). It carries out the reaction L-phenylalanine(in) + Na(+)(in) = L-phenylalanine(out) + Na(+)(out). Its activity is regulated as follows. Inhibited by N-methyl-D-glucamine. Inhibited by choline. Allosteric regulation of sodium ions binding by pH. Functionally, symporter that cotransports neutral amino acids and sodium ions from the extracellular to the intracellular side of the cell membrane. The transport is pH-sensitive, Li(+)-intolerant, electrogenic, driven by the Na(+) electrochemical gradient and cotransports of neutral amino acids and sodium ions with a stoichiometry of 1:1. The chain is Sodium-coupled neutral amino acid symporter 2 from Xenopus tropicalis (Western clawed frog).